Reading from the N-terminus, the 477-residue chain is Regulatory protein HrpB (477 aa).

The 103-residue stretch at 375–477 (RRAYRYIIEN…NEAPSETIWR (103 aa)) folds into the HTH araC/xylS-type domain. DNA-binding regions (H-T-H motif) lie at residues 393-414 (REVA…KSAV) and 444-467 (IIDT…RKQF).

In terms of biological role, positive regulation of hypersensitive response genes involved in plant pathogenicity and partly of its own synthesis in minimal medium. The polypeptide is Regulatory protein HrpB (hrpB) (Ralstonia nicotianae (strain ATCC BAA-1114 / GMI1000) (Ralstonia solanacearum)).